We begin with the raw amino-acid sequence, 793 residues long: Neurobeachin (793 aa).

2 disordered regions span residues 68 to 92 (ENIK…TGAK) and 685 to 793 (RETA…EILK). 4 stretches are compositionally biased toward polar residues: residues 77–90 (NVST…QTTG), 689–710 (RSGS…STET), 750–762 (NILN…TSTG), and 782–793 (ESLTESPSEILK).

The protein belongs to the WD repeat neurobeachin family. Interacts with RII subunit of PKA. In terms of tissue distribution, forebrain and cerebellum.

The protein localises to the cytoplasm. It localises to the membrane. In terms of biological role, binds to type II regulatory subunits of protein kinase A and anchors/targets them to the membrane. May anchor the kinase to cytoskeletal and/or organelle-associated proteins. The polypeptide is Neurobeachin (NBEA) (Gallus gallus (Chicken)).